Reading from the N-terminus, the 246-residue chain is Biosynthetic peptidoglycan transglycosylase (246 aa).

A helical transmembrane segment spans residues 27-47 (VVFCFFFAVFALLLIFRFVPI).

It belongs to the glycosyltransferase 51 family.

The protein resides in the cell inner membrane. The enzyme catalyses [GlcNAc-(1-&gt;4)-Mur2Ac(oyl-L-Ala-gamma-D-Glu-L-Lys-D-Ala-D-Ala)](n)-di-trans,octa-cis-undecaprenyl diphosphate + beta-D-GlcNAc-(1-&gt;4)-Mur2Ac(oyl-L-Ala-gamma-D-Glu-L-Lys-D-Ala-D-Ala)-di-trans,octa-cis-undecaprenyl diphosphate = [GlcNAc-(1-&gt;4)-Mur2Ac(oyl-L-Ala-gamma-D-Glu-L-Lys-D-Ala-D-Ala)](n+1)-di-trans,octa-cis-undecaprenyl diphosphate + di-trans,octa-cis-undecaprenyl diphosphate + H(+). It functions in the pathway cell wall biogenesis; peptidoglycan biosynthesis. Its function is as follows. Peptidoglycan polymerase that catalyzes glycan chain elongation from lipid-linked precursors. The sequence is that of Biosynthetic peptidoglycan transglycosylase from Haemophilus influenzae (strain ATCC 51907 / DSM 11121 / KW20 / Rd).